We begin with the raw amino-acid sequence, 419 residues long: Protein transport protein sec9 (419 aa).

Positions methionine 1 to valine 11 are enriched in basic residues. Disordered stretches follow at residues methionine 1 to serine 60, alanine 116 to aspartate 143, and alanine 156 to arginine 186. Polar residues predominate over residues glutamate 21–serine 32. Over residues glycine 36–serine 60 the composition is skewed to low complexity. Serine 141 is modified (phosphoserine). 2 t-SNARE coiled-coil homology domains span residues glutamine 203–leucine 265 and aspartate 356–isoleucine 418.

Belongs to the SNAP-25 family.

In terms of biological role, has a role in cell separation, a final step of cytokinesis and in the assembly of the forespore membrane. May have a role in the transport of secretory proteins to these growing sites. The chain is Protein transport protein sec9 (sec9) from Schizosaccharomyces pombe (strain 972 / ATCC 24843) (Fission yeast).